Reading from the N-terminus, the 86-residue chain is Small ribosomal subunit protein uS17 (86 aa).

Belongs to the universal ribosomal protein uS17 family. In terms of assembly, part of the 30S ribosomal subunit.

In terms of biological role, one of the primary rRNA binding proteins, it binds specifically to the 5'-end of 16S ribosomal RNA. The chain is Small ribosomal subunit protein uS17 from Roseiflexus castenholzii (strain DSM 13941 / HLO8).